Consider the following 613-residue polypeptide: Autophagy-related protein 22-2 (613 aa).

The disordered stretch occupies residues 1-30 (MAFNSTPPVSPGGEAQQRPPRFPGEDTTPT). Residues 41–61 (YGIAAEVFAVCGVGSFLPLTL) form a helical membrane-spanning segment. N-linked (GlcNAc...) asparagine glycosylation occurs at Asn90. Transmembrane regions (helical) follow at residues 120 to 140 (SFAM…LISF), 167 to 187 (LFIF…VVGV), 189 to 209 (CLGS…ANDP), 278 to 298 (VGLG…MLFA), 307 to 327 (ISGT…WFSF), 382 to 402 (VIIF…VSGT), and 418 to 438 (VGLL…LWPV). N-linked (GlcNAc...) asparagine glycosylation occurs at Asn448. 4 helical membrane passes run 453–473 (LCIA…IPLF), 477–497 (GVVG…HGLV), 508–528 (FFGL…YAAT), and 553–573 (GFFF…MVNA). The tract at residues 592-613 (REHASEYGGPSEEAEGLLARDI) is disordered.

The protein belongs to the ATG22 family.

The protein resides in the vacuole membrane. Functionally, vacuolar effluxer which mediate the efflux of amino acids resulting from autophagic degradation. The release of autophagic amino acids allows the maintenance of protein synthesis and viability during nitrogen starvation. The sequence is that of Autophagy-related protein 22-2 (atg22-2) from Aspergillus fumigatus (strain ATCC MYA-4609 / CBS 101355 / FGSC A1100 / Af293) (Neosartorya fumigata).